Here is a 96-residue protein sequence, read N- to C-terminus: uncharacterized protein (96 aa).

It localises to the mitochondrion. This is an uncharacterized protein from Schizosaccharomyces pombe (strain 972 / ATCC 24843) (Fission yeast).